Reading from the N-terminus, the 20-residue chain is TVLKTDAQCNCEAFKALSLP.

Belongs to the plant LTP family.

This is Non-specific lipid-transfer protein-like protein from Jatropha curcas (Barbados nut).